The primary structure comprises 457 residues: Argininosuccinate lyase (457 aa).

The protein belongs to the lyase 1 family. Argininosuccinate lyase subfamily.

It is found in the cytoplasm. It carries out the reaction 2-(N(omega)-L-arginino)succinate = fumarate + L-arginine. It participates in amino-acid biosynthesis; L-arginine biosynthesis; L-arginine from L-ornithine and carbamoyl phosphate: step 3/3. In Yersinia pseudotuberculosis serotype O:3 (strain YPIII), this protein is Argininosuccinate lyase.